The following is a 420-amino-acid chain: Gamma-glutamyl phosphate reductase (420 aa).

The protein belongs to the gamma-glutamyl phosphate reductase family.

Its subcellular location is the cytoplasm. The catalysed reaction is L-glutamate 5-semialdehyde + phosphate + NADP(+) = L-glutamyl 5-phosphate + NADPH + H(+). It functions in the pathway amino-acid biosynthesis; L-proline biosynthesis; L-glutamate 5-semialdehyde from L-glutamate: step 2/2. In terms of biological role, catalyzes the NADPH-dependent reduction of L-glutamate 5-phosphate into L-glutamate 5-semialdehyde and phosphate. The product spontaneously undergoes cyclization to form 1-pyrroline-5-carboxylate. This Streptococcus pneumoniae (strain P1031) protein is Gamma-glutamyl phosphate reductase.